The primary structure comprises 247 residues: Carboxy-S-adenosyl-L-methionine synthase (247 aa).

S-adenosyl-L-methionine-binding positions include Tyr40, 65–67 (GSS), 90–91 (DN), 122–123 (DI), Asn137, and Arg204.

Belongs to the class I-like SAM-binding methyltransferase superfamily. Cx-SAM synthase family. Homodimer.

The catalysed reaction is prephenate + S-adenosyl-L-methionine = carboxy-S-adenosyl-L-methionine + 3-phenylpyruvate + H2O. Catalyzes the conversion of S-adenosyl-L-methionine (SAM) to carboxy-S-adenosyl-L-methionine (Cx-SAM). The chain is Carboxy-S-adenosyl-L-methionine synthase from Pseudomonas savastanoi pv. phaseolicola (strain 1448A / Race 6) (Pseudomonas syringae pv. phaseolicola (strain 1448A / Race 6)).